A 370-amino-acid polypeptide reads, in one-letter code: Anthranilate phosphoribosyltransferase (370 aa).

5-phospho-alpha-D-ribose 1-diphosphate-binding positions include Gly82, 85–86 (GD), Thr90, 92–95 (NVST), 110–118 (KHGNRAATS), and Ser122. Gly82 contacts anthranilate. Mg(2+) is bound at residue Ser94. Residue Asn113 participates in anthranilate binding. Residue Arg168 participates in anthranilate binding. Mg(2+)-binding residues include Asp226 and Glu227.

The protein belongs to the anthranilate phosphoribosyltransferase family. In terms of assembly, homodimer. Mg(2+) serves as cofactor.

The catalysed reaction is N-(5-phospho-beta-D-ribosyl)anthranilate + diphosphate = 5-phospho-alpha-D-ribose 1-diphosphate + anthranilate. It functions in the pathway amino-acid biosynthesis; L-tryptophan biosynthesis; L-tryptophan from chorismate: step 2/5. In terms of biological role, catalyzes the transfer of the phosphoribosyl group of 5-phosphorylribose-1-pyrophosphate (PRPP) to anthranilate to yield N-(5'-phosphoribosyl)-anthranilate (PRA). The chain is Anthranilate phosphoribosyltransferase from Methanosarcina mazei (strain ATCC BAA-159 / DSM 3647 / Goe1 / Go1 / JCM 11833 / OCM 88) (Methanosarcina frisia).